The chain runs to 465 residues: tRNA modification GTPase MnmE (465 aa).

(6S)-5-formyl-5,6,7,8-tetrahydrofolate-binding residues include R23, E81, and K120. The region spanning 217–389 is the TrmE-type G domain; that stretch reads GVHVVLAGRP…LIASLCDKVG (173 aa). N227 contributes to the K(+) binding site. Residues 227-232, 246-252, and 271-274 each bind GTP; these read NAGKSS, TDVAGTT, and DTAG. S231 is a Mg(2+) binding site. T246, V248, and T251 together coordinate K(+). Mg(2+) is bound at residue T252. Residue K465 participates in (6S)-5-formyl-5,6,7,8-tetrahydrofolate binding.

This sequence belongs to the TRAFAC class TrmE-Era-EngA-EngB-Septin-like GTPase superfamily. TrmE GTPase family. In terms of assembly, homodimer. Heterotetramer of two MnmE and two MnmG subunits. Requires K(+) as cofactor.

It is found in the cytoplasm. In terms of biological role, exhibits a very high intrinsic GTPase hydrolysis rate. Involved in the addition of a carboxymethylaminomethyl (cmnm) group at the wobble position (U34) of certain tRNAs, forming tRNA-cmnm(5)s(2)U34. This Psychrobacter sp. (strain PRwf-1) protein is tRNA modification GTPase MnmE.